The chain runs to 293 residues: MEGSLFFTNATPSTSILKITDYKYLRLEKNDSTFVAELVLCRPKQYNSMDDDFYNEFISIYDEIQNDSKIRCVILRGEGKGLTAGLNLGKIAPLITGDSEVSQSQNNLDLFKMIRRWQASLDKINKCSKPTIALIHGACIGGGVDMITACDIRLCSSDAKFSIRETKLSIIADLGTLQRISKIVGSGFARELALTGKDIDAKTAERFNLVNHVYPDHDTLLSEGRKLALSIAQNSPLVVQATKLTLNHADDHTIDEGLYRVALQNAAFLKSDDLNESATSFFEKRQPIFKCNL.

Substrate contacts are provided by residues 84 to 88 and G142; that span reads AGLNL.

The protein belongs to the enoyl-CoA hydratase/isomerase family.

The protein localises to the mitochondrion. It carries out the reaction (3E,5Z)-octadienoyl-CoA = (2E,4E)-octadienoyl-CoA. It catalyses the reaction (3E,5Z,8Z,11Z,14Z)-eicosapentaenoyl-CoA = (2E,4E,8Z,11Z,14Z)-eicosapentaenoyl-CoA. It functions in the pathway lipid metabolism; fatty acid beta-oxidation. Functionally, isomerization of 3-trans,5-cis-dienoyl-CoA to 2-trans,4-trans-dienoyl-CoA. In Dictyostelium discoideum (Social amoeba), this protein is Delta(3,5)-Delta(2,4)-dienoyl-CoA isomerase, mitochondrial (ech1).